A 401-amino-acid chain; its full sequence is Transcription factor atf-2 (401 aa).

Residues 19-38 (SASAEFSSSSSDSSNFSEGS) show a composition bias toward low complexity. Residues 19 to 78 (SASAEFSSSSSDSSNFSEGSPPESRRNSVNESVIKDEHYWERRRRNNDASRRSREKRRQN) are disordered. Positions 41-78 (ESRRNSVNESVIKDEHYWERRRRNNDASRRSREKRRQN) are enriched in basic and acidic residues. The bZIP 1 domain maps to 54–100 (DEHYWERRRRNNDASRRSREKRRQNDLAMEEKIMLLSAENERLKSQL). The segment at 60 to 85 (RRRRNNDASRRSREKRRQNDLAMEEK) is basic motif 1. The interval 89-96 (LSAENERL) is leucine-zipper 1. Over residues 181-211 (SASSLFSSSSSSAFHPFRPSESAQQSFPSSS) the composition is skewed to low complexity. 2 disordered regions span residues 181–256 (SASS…PQPV) and 273–345 (QRRP…AAKR). 2 stretches are compositionally biased toward polar residues: residues 222–256 (DSST…PQPV) and 273–283 (QRRPSPTVPQS). The segment covering 305-317 (ESVSSSASFSPSH) has biased composition (low complexity). The region spanning 329-392 (SPQYVDRRRR…AHFKSVLAQR (64 aa)) is the bZIP 2 domain. A basic motif 2 region spans residues 335–360 (RRRRNNEAAKRCRANRRAVFEYRSRR). Residues 361 to 388 (VQLLEGENEDLRTQIETLKAEIAHFKSV) are a coiled coil. The segment at 364-378 (LEGENEDLRTQIETL) is leucine-zipper 2.

Belongs to the bZIP family. As to quaternary structure, interacts with cell death specification protein ces-2. Post-translationally, phosphorylated by mitogen-activated protein kinases pmk-2 and pmk-3. May be responsive to osmotic stress.

It localises to the nucleus. In terms of biological role, acts as a transcription factor that recognizes and binds to the sequence 5'-[GA]TTA[CT]GTAA[CT]-3', a sequence present in many promoters. Involved in the development of the excretory duct cell, by positively modulating embryonic transcription of putative transcription factor lin-48, acting in concert with cell death specification protein ces-2. Negatively modulates expression of key autophagy-related genes, bec-1/ATG6 and lgg-1/ATG8, and may link together autophagy and apoptosis during development. Positively modulates expression of neuropeptide pigment dispersing factor homologs pdf-1 and pdf-2. The polypeptide is Transcription factor atf-2 (Caenorhabditis elegans).